We begin with the raw amino-acid sequence, 140 residues long: Cytochrome c oxidase subunit 6, mitochondrial (140 aa).

It belongs to the cytochrome c oxidase subunit 5A family. In terms of assembly, component of the cytochrome c oxidase (complex IV, CIV), a multisubunit enzyme composed of a catalytic core of 3 subunits and several supernumerary subunits. The complex exists as a monomer or a dimer and forms supercomplexes (SCs) in the inner mitochondrial membrane with ubiquinol-cytochrome c oxidoreductase (cytochrome b-c1 complex, complex III, CIII).

The protein resides in the mitochondrion inner membrane. It participates in energy metabolism; oxidative phosphorylation. Component of the cytochrome c oxidase, the last enzyme in the mitochondrial electron transport chain which drives oxidative phosphorylation. The respiratory chain contains 3 multisubunit complexes succinate dehydrogenase (complex II, CII), ubiquinol-cytochrome c oxidoreductase (cytochrome b-c1 complex, complex III, CIII) and cytochrome c oxidase (complex IV, CIV), that cooperate to transfer electrons derived from NADH and succinate to molecular oxygen, creating an electrochemical gradient over the inner membrane that drives transmembrane transport and the ATP synthase. Cytochrome c oxidase is the component of the respiratory chain that catalyzes the reduction of oxygen to water. Electrons originating from reduced cytochrome c in the intermembrane space (IMS) are transferred via the dinuclear copper A center (CU(A)) of subunit 2 and heme A of subunit 1 to the active site in subunit 1, a binuclear center (BNC) formed by heme A3 and copper B (CU(B)). The BNC reduces molecular oxygen to 2 water molecules using 4 electrons from cytochrome c in the IMS and 4 protons from the mitochondrial matrix. The polypeptide is Cytochrome c oxidase subunit 6, mitochondrial (cox6) (Schizosaccharomyces pombe (strain 972 / ATCC 24843) (Fission yeast)).